The primary structure comprises 286 residues: Peroxisomal membrane protein pex14 (286 aa).

Positions threonine 61–tryptophan 69 match the SH3-binding motif. Residues lysine 122–glutamine 214 are a coiled coil. Residues lysine 218–aspartate 239 are disordered.

Belongs to the peroxin-14 family. Interacts with PEX13 (via SH3 domain); forming the PEX13-PEX14 docking complex. Interacts with PEX5 (via WxxxF/Y motifs).

Its subcellular location is the peroxisome membrane. Component of the PEX13-PEX14 docking complex, a translocon channel that specifically mediates the import of peroxisomal cargo proteins bound to PEX5 receptor. The PEX13-PEX14 docking complex forms a large import pore which can be opened to a diameter of about 9 nm. Mechanistically, PEX5 receptor along with cargo proteins associates with the PEX14 subunit of the PEX13-PEX14 docking complex in the cytosol, leading to the insertion of the receptor into the organelle membrane with the concomitant translocation of the cargo into the peroxisome matrix. The polypeptide is Peroxisomal membrane protein pex14 (pex14) (Schizosaccharomyces pombe (strain 972 / ATCC 24843) (Fission yeast)).